A 419-amino-acid polypeptide reads, in one-letter code: UDP-N-acetylglucosamine 1-carboxyvinyltransferase 2 (419 aa).

24-25 (KN) lines the phosphoenolpyruvate pocket. Arginine 94 is a binding site for UDP-N-acetyl-alpha-D-glucosamine. The Proton donor role is filled by cysteine 118. A 2-(S-cysteinyl)pyruvic acid O-phosphothioketal modification is found at cysteine 118. Residues 123 to 127 (RPIDQ), aspartate 307, and isoleucine 329 contribute to the UDP-N-acetyl-alpha-D-glucosamine site.

Belongs to the EPSP synthase family. MurA subfamily.

The protein localises to the cytoplasm. It carries out the reaction phosphoenolpyruvate + UDP-N-acetyl-alpha-D-glucosamine = UDP-N-acetyl-3-O-(1-carboxyvinyl)-alpha-D-glucosamine + phosphate. It participates in cell wall biogenesis; peptidoglycan biosynthesis. Cell wall formation. Adds enolpyruvyl to UDP-N-acetylglucosamine. The sequence is that of UDP-N-acetylglucosamine 1-carboxyvinyltransferase 2 from Staphylococcus aureus (strain MSSA476).